Reading from the N-terminus, the 184-residue chain is Regulatory protein RecX (184 aa).

The disordered stretch occupies residues 1–21 (MTLFPLPSTSDPAEADESTKR).

It belongs to the RecX family.

The protein localises to the cytoplasm. Modulates RecA activity. The sequence is that of Regulatory protein RecX from Mycolicibacterium vanbaalenii (strain DSM 7251 / JCM 13017 / BCRC 16820 / KCTC 9966 / NRRL B-24157 / PYR-1) (Mycobacterium vanbaalenii).